Consider the following 412-residue polypeptide: NFATC2-interacting protein (412 aa).

Positions 1 to 38 are disordered; it reads MAEPLRGRGPRSRGGRGARRARGARGRCPRARQSPARL. The span at 8–30 shows a compositional bias: basic residues; that stretch reads RGPRSRGGRGARRARGARGRCPR. A phosphoserine mark is found at serine 49, serine 51, serine 79, serine 81, and serine 83. Residues 58-115 form a disordered region; the sequence is VADPVEVPVARLPAPAKPEQDSDSDSEGAAEGPAGAPRTLVRRRRRRLLDPGEAPVVP. Residues 86–96 show a composition bias toward low complexity; that stretch reads AAEGPAGAPRT. Serine 118 bears the Phosphoserine mark. Lysine 120 is covalently cross-linked (Glycyl lysine isopeptide (Lys-Gly) (interchain with G-Cter in SUMO2)). The tract at residues 136–206 is disordered; the sequence is KLCPSEPEDE…SSRNKSRKHT (71 aa). The stretch at 168 to 227 forms a coiled coil; that stretch reads RKKLRKKCEKEEKKMEEFPDQDISPLPQPSSRNKSRKHTEALQKLREVNKRLQDLRSCLS. The segment covering 175–184 has biased composition (basic and acidic residues); sequence CEKEEKKMEE. A phosphoserine mark is found at serine 191, serine 197, and serine 307. Residues threonine 309 and threonine 311 each carry the phosphothreonine modification. The Ubiquitin-like domain occupies 341–412; sequence LRLRVQGKEK…ESGDLIEVWG (72 aa). A phosphoserine mark is found at serine 362 and serine 383.

In terms of assembly, interacts with NFATC2, TRAF1, TRAF2 and PRMT1. Interacts with UBE2I/UBC9. Methylation at the N-terminus by PRMT1 modulates interaction with the NFAT complex and results in augmented cytokine production. Highest level detected in spleen, thymus and testis.

The protein resides in the nucleus. It localises to the cytoplasm. In T-helper 2 (Th2) cells, regulates the magnitude of NFAT-driven transcription of a specific subset of cytokine genes, including IL3, IL4, IL5 and IL13, but not IL2. Recruits PRMT1 to the IL4 promoter; this leads to enhancement of histone H4 'Arg-3'-methylation and facilitates subsequent histone acetylation at the IL4 locus, thus promotes robust cytokine expression. Down-regulates formation of poly-SUMO chains by UBE2I/UBC9. The polypeptide is NFATC2-interacting protein (Nfatc2ip) (Mus musculus (Mouse)).